A 136-amino-acid chain; its full sequence is Translation initiation factor 5A (136 aa).

Lys-37 carries the post-translational modification Hypusine.

This sequence belongs to the eIF-5A family.

It localises to the cytoplasm. In terms of biological role, functions by promoting the formation of the first peptide bond. This Thermococcus kodakarensis (strain ATCC BAA-918 / JCM 12380 / KOD1) (Pyrococcus kodakaraensis (strain KOD1)) protein is Translation initiation factor 5A.